Here is a 360-residue protein sequence, read N- to C-terminus: MSTVICMKQREEEFLLTIRPFANRMQKSPCYIPIVSSATLWDRSTPSAKHIPCYERTSVPCSRFINHMKNFSESPKFRSLHFLNFPVFPERTQNSMACKRLLHTCQYIVPRCSVSTVSFDEESYEEFRSSPAPSSETDEAPLIFTARGETEERARGAPKQAWNSSFLEQLVKKPNWAHSVNPVHLEAQGIHISRHTRPKGQPLSSPKKNSGSAARPSTAIGLCRRSQTPGALQSTGPSNTELEPEERMAVPAGAQAHPDDIQSRLLGASGNPVGKGAVAMAPEMLPKHPHTPRDRRPQADTSLHGNLAGAPLPLLAGASTHFPSKRLIKVCSSAPPRPTRRFHTVCSQALSRPVVNAHLH.

Positions 193-245 (SRHTRPKGQPLSSPKKNSGSAARPSTAIGLCRRSQTPGALQSTGPSNTELEPE) are disordered. Composition is skewed to polar residues over residues 202-212 (PLSSPKKNSGS) and 225-241 (RSQTPGALQSTGPSNTE).

This is an uncharacterized protein from Homo sapiens (Human).